Reading from the N-terminus, the 437-residue chain is Ribosomal protein uS12 methylthiotransferase RimO (437 aa).

Positions 5–116 (PTISVSHLGC…IAEVIQRVET (112 aa)) constitute an MTTase N-terminal domain. Residues C14, C50, C79, C154, C158, and C161 each contribute to the [4Fe-4S] cluster site. Residues 140-369 (TTNEAVAYLR…MEIQQPIAAK (230 aa)) enclose the Radical SAM core domain. Residues 372 to 437 (QKCVGQTVEV…DVYDLYGKVI (66 aa)) form the TRAM domain.

It belongs to the methylthiotransferase family. RimO subfamily. Requires [4Fe-4S] cluster as cofactor.

The protein resides in the cytoplasm. The enzyme catalyses L-aspartate(89)-[ribosomal protein uS12]-hydrogen + (sulfur carrier)-SH + AH2 + 2 S-adenosyl-L-methionine = 3-methylsulfanyl-L-aspartate(89)-[ribosomal protein uS12]-hydrogen + (sulfur carrier)-H + 5'-deoxyadenosine + L-methionine + A + S-adenosyl-L-homocysteine + 2 H(+). Catalyzes the methylthiolation of an aspartic acid residue of ribosomal protein uS12. The polypeptide is Ribosomal protein uS12 methylthiotransferase RimO (Crocosphaera subtropica (strain ATCC 51142 / BH68) (Cyanothece sp. (strain ATCC 51142))).